The chain runs to 352 residues: Anthranilate phosphoribosyltransferase (352 aa).

5-phospho-alpha-D-ribose 1-diphosphate is bound by residues glycine 94, 97 to 98 (GS), serine 102, 104 to 107 (NIST), 122 to 130 (KHGNRAVSS), and serine 134. Glycine 94 contributes to the anthranilate binding site. Position 106 (serine 106) interacts with Mg(2+). Asparagine 125 contributes to the anthranilate binding site. Arginine 180 is an anthranilate binding site. Positions 239 and 240 each coordinate Mg(2+).

The protein belongs to the anthranilate phosphoribosyltransferase family. In terms of assembly, homodimer. Mg(2+) is required as a cofactor.

It catalyses the reaction N-(5-phospho-beta-D-ribosyl)anthranilate + diphosphate = 5-phospho-alpha-D-ribose 1-diphosphate + anthranilate. It participates in amino-acid biosynthesis; L-tryptophan biosynthesis; L-tryptophan from chorismate: step 2/5. Its function is as follows. Catalyzes the transfer of the phosphoribosyl group of 5-phosphorylribose-1-pyrophosphate (PRPP) to anthranilate to yield N-(5'-phosphoribosyl)-anthranilate (PRA). In Citrifermentans bemidjiense (strain ATCC BAA-1014 / DSM 16622 / JCM 12645 / Bem) (Geobacter bemidjiensis), this protein is Anthranilate phosphoribosyltransferase.